Here is a 184-residue protein sequence, read N- to C-terminus: Tumor necrosis factor alpha-induced protein 8-like protein 2 (184 aa).

The protein belongs to the TNFAIP8 family. TNFAIP8L2 subfamily. In terms of assembly, may interact with CASP8; however, such result is unclear since could not reproduce the interaction with CASP8. Interacts with RAC1. Ubiquitinated in a BTRC-depdent manner; leading to degradation mediated through the proteasome pathway.

Its subcellular location is the cytoplasm. It localises to the nucleus. The protein localises to the lysosome. Its function is as follows. Acts as a negative regulator of innate and adaptive immunity by maintaining immune homeostasis. Plays a regulatory role in the Toll-like signaling pathway by determining the strength of LPS-induced signaling and gene expression. Inhibits TCR-mediated T-cell activation and negatively regulate T-cell function to prevent hyperresponsiveness. Also inhibits autolysosome formation via negatively modulating MTOR activation by interacting with RAC1 and promoting the disassociation of the RAC1-MTOR complex. Plays an essential role in NK-cell biology by acting as a checkpoint and displaying an expression pattern correlating with NK-cell maturation process and by negatively regulating NK-cell maturation and antitumor immunity. Mechanistically, suppresses IL-15-triggered mTOR activity in NK-cells. The sequence is that of Tumor necrosis factor alpha-induced protein 8-like protein 2 (TNFAIP8L2) from Rhinolophus ferrumequinum (Greater horseshoe bat).